Reading from the N-terminus, the 100-residue chain is UPF0213 protein YhbQ (100 aa).

A GIY-YIG domain is found at 2-77; that stretch reads TPWFLYLIRT…KQLTKRQKER (76 aa).

This sequence belongs to the UPF0213 family.

The chain is UPF0213 protein YhbQ from Escherichia coli (strain K12 / MC4100 / BW2952).